Here is a 534-residue protein sequence, read N- to C-terminus: MWDSPIIFTTMRELVQSVSPAALSWAVVAIYLGTFFWLRSRSSKQRLPLPPGPRGLPLIGNSLQTPAVNPWEKYKEWSDEYGPVMTLSLGLTTTIILSSHQVANDLMEKKSTIYSSRPQLVMFNRLSGGMNSSGMEYGKRWRDHRSLQASVLRPWMTQRYTALRDVETKQLLAELLNTDDFSSCFKRMVASLFMTLAYGKRVQYPDDPEIRGMEELVRVKSEAGEASFRATGQLVEYIPLLQYLPSFLTPWKEMCDRICEQFNKTFVDRLRDGINAPAWTWAKEVSKHKVARPMSELEISYTLGTLYEASLTSQQILRIIVLVAALYPEKTAKAQEELDRVVGTGRLPAAADARNLPYIDAFVKEALRWRPFAPLGAPRESIRDVEYNGYLIPKGATILVNQWALDYNEDMFPEPFSFLPERWVANPNLPFSTFGFGQRGCPGRYFAQDSLFISTARLLWAFNIRTASPVEVEDMLRNPSAGAFLSPIPEFDATFTARDAQRKALIEKEWEISPKESYAILQEVEKELISEGAE.

Residues 18 to 38 (VSPAALSWAVVAIYLGTFFWL) traverse the membrane as a helical segment. Heme is bound at residue C441.

This sequence belongs to the cytochrome P450 family. Requires heme as cofactor.

It localises to the membrane. The enzyme catalyses preechinulin + reduced [NADPH--hemoprotein reductase] + O2 = neoechinulin A + oxidized [NADPH--hemoprotein reductase] + 2 H2O + H(+). Its pathway is secondary metabolite biosynthesis. The protein operates within alkaloid biosynthesis. Cytochrome P450 monooxygenase; part of the gene cluster that mediates the biosynthesis of echinulin family alkaloid. The pathway begins with the biosynthesis of the cyclic dipeptide cyclo-L-Trp-L-Ala (cyclo-TA) by the NRPS echPS via condensation of L-alanine and L-tryptophan. The prenyltransferase echPT1 then catalyzes the first prenylation step, a reverse prenylation reaction at C2, to yield preechinulin. Preechinulin is the substrate of the cytochrome P450 monooxygenase echP450 that catalyzes the formation of the double bond between C10 and C11 to produce neoechulin A. The unique prenyltransferase echPT2 functions as a competitive enzyme with echP450 for preechinulin metabolization and uses preechinulin for effective regiospecific prenylations. Preechinulin is prenylated by echPT2 at C5 or C7. C7-prenylation leads to accumulation of tardioxopiperazine B without further modification by echPT2. In contrast, the C5-prenylated tardioxopiperazine A can be prenylated again by echPT2, predominantly at C7 to form echinulin or less frequently at C4 to give variecolorin L. EchPT2 also accepts neoechilunin A to produce varlecolorin G (prenylation at C5) or isoechinulin A (prenylation at C7). EchPT2 further converts isoechinulin A into dehydroechinulin. Moreover, a yet unidentified enzyme can also convert neoechilunin A into neoechilunin B by introducing a double bond between positions C14 and C17 and thus provides a further substrate to echPT2 for C5 and C7 prenylation. This is Echilunin cytochrome P450 monooxygenase from Aspergillus ruber (strain CBS 135680).